The sequence spans 459 residues: Putrescine aminotransferase (459 aa).

Pyridoxal 5'-phosphate-binding positions include 150-151 (GT) and Gln274. Lys300 carries the post-translational modification N6-(pyridoxal phosphate)lysine. A pyridoxal 5'-phosphate-binding site is contributed by Thr332.

This sequence belongs to the class-III pyridoxal-phosphate-dependent aminotransferase family. Putrescine aminotransferase subfamily. It depends on pyridoxal 5'-phosphate as a cofactor.

It catalyses the reaction an alkane-alpha,omega-diamine + 2-oxoglutarate = an omega-aminoaldehyde + L-glutamate. It carries out the reaction putrescine + 2-oxoglutarate = 1-pyrroline + L-glutamate + H2O. The catalysed reaction is cadaverine + 2-oxoglutarate = 5-aminopentanal + L-glutamate. It participates in amine and polyamine degradation; putrescine degradation; 4-aminobutanal from putrescine (transaminase route): step 1/1. Its function is as follows. Catalyzes the aminotransferase reaction from putrescine to 2-oxoglutarate, leading to glutamate and 4-aminobutanal, which spontaneously cyclizes to form 1-pyrroline. This is the first step in one of two pathways for putrescine degradation, where putrescine is converted into 4-aminobutanoate (gamma-aminobutyrate or GABA) via 4-aminobutanal. Also functions as a cadaverine transaminase in a a L-lysine degradation pathway to succinate that proceeds via cadaverine, glutarate and L-2-hydroxyglutarate. The polypeptide is Putrescine aminotransferase (Salmonella heidelberg (strain SL476)).